The chain runs to 767 residues: Syn-copalyl diphosphate synthase (767 aa).

Residues 45 to 74 are disordered; the sequence is GPMLISKSPPYPASEETREWEAEGQHEHTD. Positions 59–74 are enriched in basic and acidic residues; the sequence is EETREWEAEGQHEHTD. Lys-233 is a substrate binding site. Mg(2+) is bound by residues Asp-365 and Asp-367. Residues 365–368 carry the DXDD motif motif; that stretch reads DIDD. Position 453 (Lys-453) interacts with substrate.

It depends on Mg(2+) as a cofactor.

The catalysed reaction is (2E,6E,10E)-geranylgeranyl diphosphate = 9alpha-copalyl diphosphate. Its function is as follows. Catalyzes the conversion of geranylgeranyl diphosphate to the phytoalexin precursor syn-copalyl diphosphate. This chain is Syn-copalyl diphosphate synthase (CPS4), found in Oryza sativa subsp. indica (Rice).